Here is a 744-residue protein sequence, read N- to C-terminus: Phosphoribosylformylglycinamidine synthase subunit PurL (744 aa).

Residue His50 is part of the active site. Residues Tyr53 and Lys92 each coordinate ATP. A Mg(2+)-binding site is contributed by Glu94. Substrate contacts are provided by residues 95–98 (SHNH) and Arg117. His96 acts as the Proton acceptor in catalysis. Asp118 contributes to the Mg(2+) binding site. Gln241 lines the substrate pocket. Residue Asp269 participates in Mg(2+) binding. A substrate-binding site is contributed by 313 to 315 (ESQ). The ATP site is built by Asp495 and Gly532. Asn533 contributes to the Mg(2+) binding site. A substrate-binding site is contributed by Ser535.

Belongs to the FGAMS family. Monomer. Part of the FGAM synthase complex composed of 1 PurL, 1 PurQ and 2 PurS subunits.

The protein resides in the cytoplasm. The catalysed reaction is N(2)-formyl-N(1)-(5-phospho-beta-D-ribosyl)glycinamide + L-glutamine + ATP + H2O = 2-formamido-N(1)-(5-O-phospho-beta-D-ribosyl)acetamidine + L-glutamate + ADP + phosphate + H(+). It participates in purine metabolism; IMP biosynthesis via de novo pathway; 5-amino-1-(5-phospho-D-ribosyl)imidazole from N(2)-formyl-N(1)-(5-phospho-D-ribosyl)glycinamide: step 1/2. Functionally, part of the phosphoribosylformylglycinamidine synthase complex involved in the purines biosynthetic pathway. Catalyzes the ATP-dependent conversion of formylglycinamide ribonucleotide (FGAR) and glutamine to yield formylglycinamidine ribonucleotide (FGAM) and glutamate. The FGAM synthase complex is composed of three subunits. PurQ produces an ammonia molecule by converting glutamine to glutamate. PurL transfers the ammonia molecule to FGAR to form FGAM in an ATP-dependent manner. PurS interacts with PurQ and PurL and is thought to assist in the transfer of the ammonia molecule from PurQ to PurL. In Rhizobium johnstonii (strain DSM 114642 / LMG 32736 / 3841) (Rhizobium leguminosarum bv. viciae), this protein is Phosphoribosylformylglycinamidine synthase subunit PurL.